We begin with the raw amino-acid sequence, 960 residues long: Angiomotin-like protein 1 (960 aa).

Residues 196–248 (SQFFRGQQPPPPPPQQQPGAVGHSYYMAGGASQKARTEGRPTVSRANSGQAHK) form a disordered region. Phosphoserine is present on residues S243, S271, and S297. Residues 261 to 281 (RSLSERIMQLSLERNGAKQHL) adopt a coiled-coil conformation. Disordered stretches follow at residues 277–317 (AKQH…EYPF), 381–407 (LPFP…LHSV), and 413–432 (PPMA…SQQL). Over residues 388-401 (QQHSPVSSQNSSVS) the composition is skewed to low complexity. Coiled-coil stretches lie at residues 440–641 (VERA…WLER) and 667–697 (ALME…VEES). S722 is subject to Phosphoserine. Positions 731–761 (SLEAHIWQEEEEVVQATRRCQDMEYTIKNLH) form a coiled coil. The tract at residues 775 to 826 (QQRSRKDAGKTDSSSLRPARSVPSIAAATGTHSRQTSLTSSQLAEERKEEKT) is disordered. S795, S807, and S830 each carry phosphoserine. The span at 804–817 (GTHSRQTSLTSSQL) shows a compositional bias: polar residues. A disordered region spans residues 842–952 (NDHASTPLLP…NLLHKPEFPD (111 aa)). Positions 845–870 (ASTPLLPTPSAATLSPPTPGTSASSA) are enriched in low complexity. Over residues 898–911 (PTRSRLSGTPSNSP) the composition is skewed to polar residues. S904 bears the Phosphoserine mark. T906 is subject to Phosphothreonine. Phosphoserine is present on S910. The PDZ-binding motif lies at 957–960 (EVLI).

This sequence belongs to the angiomotin family. Polyubiquitinated by NEDD4, leading to proteasomal degradation.

Its subcellular location is the cell junction. It is found in the tight junction. In terms of biological role, inhibits the Wnt/beta-catenin signaling pathway, probably by recruiting CTNNB1 to recycling endosomes and hence preventing its translocation to the nucleus. The protein is Angiomotin-like protein 1 (AMOTL1) of Bos taurus (Bovine).